A 492-amino-acid chain; its full sequence is Dipeptide and tripeptide permease A (492 aa).

Residues 1–20 (MSTANKHPEAASLNAFKQPR) lie on the Cytoplasmic side of the membrane. The chain crosses the membrane as a helical span at residues 21–43 (SFYLIFSIELWERFGYYGLQGIM). The Periplasmic segment spans residues 44-58 (AVYLVKMLGMSEAQS). The helical transmembrane segment at 59–79 (ITLFASFSALVYGLIAVGGWL) threads the bilayer. At 80 to 88 (GDKVLGTKR) the chain is on the cytoplasmic side. The helical transmembrane segment at 89-109 (VIVLGTLVLALGYALVAWSGH) threads the bilayer. A topological domain (periplasmic) is located at residue Asp110. Residues 111–131 (IAMIYFGMATIAVGNGLFKAN) form a helical membrane-spanning segment. Over 132–152 (PSSLLSTCYEKDDPRLDGAFT) the chain is Cytoplasmic. Residues 153–173 (MYYMAINIGSFFSMLATPWLA) traverse the membrane as a helical segment. Residues 174–178 (AQFGW) are Periplasmic-facing. Residues 179–199 (STAFGLSFVGMLITLVNFMFF) form a helical membrane-spanning segment. The Cytoplasmic portion of the chain corresponds to 200-217 (RKWVKDHGSKPDFAPLNM). The chain crosses the membrane as a helical span at residues 218-238 (GKLLVTLLGIAVMIAAATWLL). Residues 239-245 (HNQDIAR) are Periplasmic-facing. Residues 246-266 (MVLGAVAVAIVVIFTKEALTL) form a helical membrane-spanning segment. Residues 267-273 (KGAARRK) are Cytoplasmic-facing. Residues 274–294 (MIVAFLLMLEAIVFFVLYMQM) traverse the membrane as a helical segment. Residues 295–319 (PTSLNFFAIRNVEHSLLGIAFQPEQ) lie on the Periplasmic side of the membrane. Residues 320–340 (FQALNPFWIMIFSPLLAALYN) form a helical membrane-spanning segment. Residues 341–351 (KLGDRMPMPHK) are Cytoplasmic-facing. A helical transmembrane segment spans residues 352 to 372 (FALGMVLCSAAFLVLPLGASL). At 373-377 (ANKMG) the chain is on the periplasmic side. A helical membrane pass occupies residues 378 to 398 (IVSVGWLVLSYALQSVGELMI). Residues 399–413 (SGLGLAMVAQLVPQR) are Cytoplasmic-facing. The chain crosses the membrane as a helical span at residues 414 to 434 (LMGFIMGSWFLTTAGAAMVAG). At 435-458 (KVANLMAVPENITNPLLSLHVYGD) the chain is on the periplasmic side. The helical transmembrane segment at 459-479 (IFFKIGITTGVIAVLMILAAP) threads the bilayer. The Cytoplasmic portion of the chain corresponds to 480–492 (LLNRMTQDEQPGV).

The protein belongs to the major facilitator superfamily. Proton-dependent oligopeptide transporter (POT/PTR) (TC 2.A.17) family. DtpA subfamily.

It is found in the cell inner membrane. In terms of biological role, proton-dependent permease that transports di- and tripeptides. This is Dipeptide and tripeptide permease A from Erwinia pyrifoliae (strain DSM 12163 / CIP 106111 / Ep16/96).